The primary structure comprises 279 residues: Diaminopimelate epimerase (279 aa).

2 residues coordinate substrate: Asn-11 and Asn-63. Residue Cys-72 is the Proton donor of the active site. Residues Gly-73–Asn-74, Asn-161, Asn-194, and Glu-212–Arg-213 contribute to the substrate site. Cys-221 functions as the Proton acceptor in the catalytic mechanism. Gly-222 to Thr-223 is a substrate binding site.

The protein belongs to the diaminopimelate epimerase family. As to quaternary structure, homodimer.

The protein resides in the cytoplasm. It carries out the reaction (2S,6S)-2,6-diaminopimelate = meso-2,6-diaminopimelate. The protein operates within amino-acid biosynthesis; L-lysine biosynthesis via DAP pathway; DL-2,6-diaminopimelate from LL-2,6-diaminopimelate: step 1/1. Functionally, catalyzes the stereoinversion of LL-2,6-diaminopimelate (L,L-DAP) to meso-diaminopimelate (meso-DAP), a precursor of L-lysine and an essential component of the bacterial peptidoglycan. This Moorella thermoacetica (strain ATCC 39073 / JCM 9320) protein is Diaminopimelate epimerase.